We begin with the raw amino-acid sequence, 878 residues long: Alanine--tRNA ligase (878 aa).

Positions 562, 566, 670, and 674 each coordinate Zn(2+).

The protein belongs to the class-II aminoacyl-tRNA synthetase family. Zn(2+) serves as cofactor.

The protein localises to the cytoplasm. It catalyses the reaction tRNA(Ala) + L-alanine + ATP = L-alanyl-tRNA(Ala) + AMP + diphosphate. Catalyzes the attachment of alanine to tRNA(Ala) in a two-step reaction: alanine is first activated by ATP to form Ala-AMP and then transferred to the acceptor end of tRNA(Ala). Also edits incorrectly charged Ser-tRNA(Ala) and Gly-tRNA(Ala) via its editing domain. The chain is Alanine--tRNA ligase from Acinetobacter baylyi (strain ATCC 33305 / BD413 / ADP1).